A 325-amino-acid polypeptide reads, in one-letter code: Gamma-hemolysin component B (325 aa).

A signal peptide spans 1-25 (MNMNKLVKSSVATSMALLLLSNTAN).

This sequence belongs to the aerolysin family. Toxicity requires sequential binding and synergistic association of a class S and a class F component which form heterooligomeric complexes. HlgB (class F) associates with either hlgA thus forming an AB toxin or with hlgC thus forming a CB toxin. Interacts with host AMFR.

Its function is as follows. Toxin that seems to act by forming pores in the membrane of the cell. Has a hemolytic and a leucotoxic activity. Promotes host AMFR-mediated inflammation by mediating 'Lys-27'-linked ubiquitination of TAB3, TAK1-TAB3 complex formation and phosphorylation of TAK1/MAP3K7. In turn, activates host NF-kappa-B signaling pathway. The sequence is that of Gamma-hemolysin component B (hlgB) from Staphylococcus aureus (strain MRSA252).